We begin with the raw amino-acid sequence, 251 residues long: E3 ubiquitin-protein ligase Os06g0535400 (251 aa).

A run of 3 helical transmembrane segments spans residues 28 to 48 (VVAATFTGSFSLQIFLFYCFA), 102 to 122 (LANRCFAVVFMVFVPLVIVVF), and 127 to 147 (ADVVAYALCLANILVMVVWLS). An RING-type; atypical zinc finger spans residues 185–227 (CCVCLAGMREAQALRDLPRCGHRFHAKCIGKWLTAHPTCPVCR).

It is found in the membrane. The enzyme catalyses S-ubiquitinyl-[E2 ubiquitin-conjugating enzyme]-L-cysteine + [acceptor protein]-L-lysine = [E2 ubiquitin-conjugating enzyme]-L-cysteine + N(6)-ubiquitinyl-[acceptor protein]-L-lysine.. It functions in the pathway protein modification; protein ubiquitination. Possesses E3 ubiquitin-protein ligase in vitro. In Oryza sativa subsp. japonica (Rice), this protein is E3 ubiquitin-protein ligase Os06g0535400.